Consider the following 1054-residue polypeptide: FERM, ARHGEF and pleckstrin domain-containing protein 2 (1054 aa).

The region spanning 44–324 (LHLRVKLLDN…EYHTFFRLLD (281 aa)) is the FERM domain. Phosphoserine occurs at positions 389 and 439. Residues 421 to 527 (EFKDSSSSLT…GAGMDCEEPR (107 aa)) are disordered. Over residues 468-492 (PGPGLSTKSPQPSPSSRKSPLSLSP) the composition is skewed to low complexity. Residues 535-726 (EAYFIVKEIL…TEVTTTLQHI (192 aa)) enclose the DH domain. The 98-residue stretch at 755-852 (EFIREGCLHK…WMLDLNSAIQ (98 aa)) folds into the PH 1 domain. A disordered region spans residues 856–894 (SGGDTAPALPGRTVCTRPPRSPNEVSLEQESEDDARGVR). Residues 929–1026 (ENQLSGYLLR…WMEVIQGASS (98 aa)) form the PH 2 domain. The segment at 1029-1054 (GRAPSIVQDGPQPSSGLEGMVRGKEE) is disordered.

In terms of assembly, interacts with PLXNA1. Interaction with PLXNA1 or PIP5K1C lowers its guanine nucleotide exchange activity. Dissociates from PLXNA1 when SEMA3A binds to the receptor. Interacts with PIP5K1C via its FERM domain. The interaction with PIP5K1C is enhanced by SEMA3A binding. Interacts with RAC1.

Functions as a guanine nucleotide exchange factor that activates RAC1. May have relatively low activity. Plays a role in the response to class 3 semaphorins and remodeling of the actin cytoskeleton. Plays a role in TNFSF11-mediated osteoclast differentiation, especially in podosome rearrangement and reorganization of the actin cytoskeleton. Regulates the activation of ITGB3, integrin signaling and cell adhesion. The sequence is that of FERM, ARHGEF and pleckstrin domain-containing protein 2 (FARP2) from Homo sapiens (Human).